Here is a 118-residue protein sequence, read N- to C-terminus: Crustacean hyperglycemic hormones 2 (118 aa).

Positions 1–22 (MTAFRLVAVALVVVVACSTTWA) are cleaved as a signal peptide. Cystine bridges form between Cys51-Cys87, Cys67-Cys83, and Cys70-Cys96. A Valine amide modification is found at Val116.

It belongs to the arthropod CHH/MIH/GIH/VIH hormone family.

It localises to the secreted. In terms of biological role, hormone found in the sinus gland of isopods and decapods which controls the blood sugar level. Has a secretagogue action over the amylase released from the midgut gland. May act as a stress hormone and may be involved in the control of molting and reproduction. The protein is Crustacean hyperglycemic hormones 2 (CHH2) of Penaeus monodon (Giant tiger prawn).